The primary structure comprises 370 residues: Serine O-succinyltransferase (370 aa).

Positions 46–355 (AILIVTGLSP…PQGHDAFLVD (310 aa)) constitute an AB hydrolase-1 domain. The segment at 52-55 (GLSP) is important for substrate specificity. The active-site Nucleophile is the S149. R218 provides a ligand contact to substrate. Catalysis depends on residues D316 and H349. Substrate is bound at residue D350.

The protein belongs to the AB hydrolase superfamily. MetX family. As to quaternary structure, homodimer.

It localises to the cytoplasm. It carries out the reaction succinyl-CoA + L-serine = O-succinyl-L-serine + CoA. The catalysed reaction is L-homoserine + succinyl-CoA = O-succinyl-L-homoserine + CoA. The protein operates within amino-acid biosynthesis; L-cysteine biosynthesis; L-cysteine from L-serine: step 1/2. Its function is as follows. Transfers a succinyl group from succinyl-CoA to L-serine, forming succinyl-L-serine. In vitro, also has homoserine succinyl transferase activity. The sequence is that of Serine O-succinyltransferase from Stenotrophomonas maltophilia (Pseudomonas maltophilia).